A 485-amino-acid chain; its full sequence is UDP-N-acetylmuramoyl-L-alanyl-D-glutamate--2,6-diaminopimelate ligase (485 aa).

Residue Ser-28 participates in UDP-N-acetyl-alpha-D-muramoyl-L-alanyl-D-glutamate binding. An ATP-binding site is contributed by 108 to 114 (GTNGKTS). UDP-N-acetyl-alpha-D-muramoyl-L-alanyl-D-glutamate is bound by residues Asn-147, 148-149 (TT), Ser-175, and Arg-183. Residue Lys-215 is modified to N6-carboxylysine. Meso-2,6-diaminopimelate is bound by residues Arg-374, 398 to 401 (DNPR), Gly-449, and Glu-453. The Meso-diaminopimelate recognition motif motif lies at 398 to 401 (DNPR).

It belongs to the MurCDEF family. MurE subfamily. Requires Mg(2+) as cofactor. In terms of processing, carboxylation is probably crucial for Mg(2+) binding and, consequently, for the gamma-phosphate positioning of ATP.

It is found in the cytoplasm. It carries out the reaction UDP-N-acetyl-alpha-D-muramoyl-L-alanyl-D-glutamate + meso-2,6-diaminopimelate + ATP = UDP-N-acetyl-alpha-D-muramoyl-L-alanyl-gamma-D-glutamyl-meso-2,6-diaminopimelate + ADP + phosphate + H(+). It functions in the pathway cell wall biogenesis; peptidoglycan biosynthesis. Its function is as follows. Catalyzes the addition of meso-diaminopimelic acid to the nucleotide precursor UDP-N-acetylmuramoyl-L-alanyl-D-glutamate (UMAG) in the biosynthesis of bacterial cell-wall peptidoglycan. This is UDP-N-acetylmuramoyl-L-alanyl-D-glutamate--2,6-diaminopimelate ligase from Fusobacterium nucleatum subsp. nucleatum (strain ATCC 25586 / DSM 15643 / BCRC 10681 / CIP 101130 / JCM 8532 / KCTC 2640 / LMG 13131 / VPI 4355).